The sequence spans 242 residues: UPF0309 protein Oant_1457 (242 aa).

The 185-residue stretch at 30–214 folds into the SIS domain; it reads AAELITAAAL…AKLVGKGDAP (185 aa).

It belongs to the UPF0309 family.

The sequence is that of UPF0309 protein Oant_1457 from Brucella anthropi (strain ATCC 49188 / DSM 6882 / CCUG 24695 / JCM 21032 / LMG 3331 / NBRC 15819 / NCTC 12168 / Alc 37) (Ochrobactrum anthropi).